The following is a 717-amino-acid chain: Fatty acid oxidation complex subunit alpha (717 aa).

Residues 1–190 (MIHAGNAITV…KDGAVDAVVA (190 aa)) are enoyl-CoA hydratase/isomerase. Residue D298 participates in substrate binding. Residues 313-717 (HPVNQAAVLG…MAANNKKFYG (405 aa)) are 3-hydroxyacyl-CoA dehydrogenase. NAD(+)-binding positions include M326, D345, 402-404 (VTE), K409, and S431. The active-site For 3-hydroxyacyl-CoA dehydrogenase activity is H452. N455 is a binding site for NAD(+). A substrate-binding site is contributed by N502.

It in the N-terminal section; belongs to the enoyl-CoA hydratase/isomerase family. This sequence in the C-terminal section; belongs to the 3-hydroxyacyl-CoA dehydrogenase family. As to quaternary structure, heterotetramer of two alpha chains (FadB) and two beta chains (FadA).

The enzyme catalyses a (3S)-3-hydroxyacyl-CoA + NAD(+) = a 3-oxoacyl-CoA + NADH + H(+). It catalyses the reaction a (3S)-3-hydroxyacyl-CoA = a (2E)-enoyl-CoA + H2O. The catalysed reaction is a 4-saturated-(3S)-3-hydroxyacyl-CoA = a (3E)-enoyl-CoA + H2O. It carries out the reaction (3S)-3-hydroxybutanoyl-CoA = (3R)-3-hydroxybutanoyl-CoA. The enzyme catalyses a (3Z)-enoyl-CoA = a 4-saturated (2E)-enoyl-CoA. It catalyses the reaction a (3E)-enoyl-CoA = a 4-saturated (2E)-enoyl-CoA. The protein operates within lipid metabolism; fatty acid beta-oxidation. Its function is as follows. Involved in the aerobic and anaerobic degradation of long-chain fatty acids via beta-oxidation cycle. Catalyzes the formation of 3-oxoacyl-CoA from enoyl-CoA via L-3-hydroxyacyl-CoA. It can also use D-3-hydroxyacyl-CoA and cis-3-enoyl-CoA as substrate. The chain is Fatty acid oxidation complex subunit alpha from Acinetobacter baumannii (strain AB307-0294).